The chain runs to 157 residues: NudC domain-containing protein 2 (157 aa).

Residue Ser2 is modified to N-acetylserine. The CS domain occupies 14–104 (CGTPWGQWYQ…DAANCWTSLL (91 aa)). The disordered stretch occupies residues 134-157 (FDFSGAEISGNYTKGGPDFSNLEK). Ser142 bears the Phosphoserine mark. Phosphotyrosine is present on Tyr145.

As to quaternary structure, interacts with LIS1.

The protein localises to the chromosome. It is found in the centromere. Its subcellular location is the kinetochore. The protein resides in the cytoplasm. It localises to the cytoskeleton. The protein localises to the microtubule organizing center. It is found in the centrosome. Its subcellular location is the spindle pole. Its function is as follows. May regulate the LIS1/dynein pathway by stabilizing LIS1 with Hsp90 chaperone. This Mus musculus (Mouse) protein is NudC domain-containing protein 2 (Nudcd2).